The primary structure comprises 297 residues: GTPase Era (297 aa).

One can recognise an Era-type G domain in the interval histidine 7–glutamate 174. The interval glycine 15–serine 22 is G1. Glycine 15 to serine 22 is a binding site for GTP. Positions glutamine 41–asparagine 45 are G2. The interval aspartate 62 to glycine 65 is G3. GTP contacts are provided by residues aspartate 62 to isoleucine 66 and asparagine 124 to aspartate 127. The interval asparagine 124–aspartate 127 is G4. The segment at valine 153–alanine 155 is G5. Residues threonine 205–arginine 282 enclose the KH type-2 domain.

Belongs to the TRAFAC class TrmE-Era-EngA-EngB-Septin-like GTPase superfamily. Era GTPase family. As to quaternary structure, monomer.

It localises to the cytoplasm. The protein resides in the cell inner membrane. An essential GTPase that binds both GDP and GTP, with rapid nucleotide exchange. Plays a role in 16S rRNA processing and 30S ribosomal subunit biogenesis and possibly also in cell cycle regulation and energy metabolism. The polypeptide is GTPase Era (Geotalea daltonii (strain DSM 22248 / JCM 15807 / FRC-32) (Geobacter daltonii)).